The sequence spans 213 residues: ER lumen protein-retaining receptor (213 aa).

The Lumenal portion of the chain corresponds to 1–2; it reads MN. Residues 3 to 21 form a helical membrane-spanning segment; that stretch reads IFRITADLAHAVAIVILLL. Residues 22-35 lie on the Cytoplasmic side of the membrane; that stretch reads KIWKSRSCEGISGR. A helical transmembrane segment spans residues 36–53; the sequence is SQILFAVTFFTRYLDLFT. The Lumenal segment spans residues 54–61; it reads SFYSLYNT. A helical transmembrane segment spans residues 62–80; the sequence is VMKVLFLAGSIGTVYLMWV. At 81 to 96 the chain is on the cytoplasmic side; sequence KFKATYDRNNDTFRIE. Residues 97–110 traverse the membrane as a helical segment; it reads FLVIPSIILALIIN. At 111–117 the chain is on the lumenal side; that stretch reads HEFMFME. The helical transmembrane segment at 118 to 137 threads the bilayer; the sequence is VMWTFSIYLEAVAIMPQLFM. The Cytoplasmic segment spans residues 138 to 149; the sequence is LSRTGNAETITA. A helical membrane pass occupies residues 150–168; the sequence is HYLFALGSYRFLYIFNWVY. At 169–178 the chain is on the lumenal side; it reads RYYTESFFDP. The helical transmembrane segment at 179 to 199 threads the bilayer; that stretch reads IAVVAGIVQTVLYADFFYLYI. At 200 to 213 the chain is on the cytoplasmic side; the sequence is TRVIQSNRQFEMSA.

It belongs to the ERD2 family.

The protein resides in the endoplasmic reticulum membrane. In terms of biological role, required for the retention of luminal endoplasmic reticulum proteins. Determines the specificity of the luminal ER protein retention system. Also required for normal vesicular traffic through the Golgi. The sequence is that of ER lumen protein-retaining receptor (erd-2.1) from Caenorhabditis briggsae.